Consider the following 937-residue polypeptide: Coiled-coil domain-containing protein 39 (937 aa).

Coiled coils occupy residues 16 to 137 (AIPV…CQMN), 165 to 339 (QQDD…KKDI), 365 to 615 (EKTL…SQIR), and 664 to 816 (VIKA…LKQT). The disordered stretch occupies residues 866-937 (LPTARGPSSR…NIPKEKKLSK (72 aa)). The span at 873-887 (SSRSSSQSSSLSSFR) shows a compositional bias: low complexity. 2 positions are modified to phosphoserine: S888 and S896. Low complexity predominate over residues 915–928 (NDSSRSASSGSNSN).

This sequence belongs to the CCDC39 family. In terms of tissue distribution, strongly expressed in tissues rich in ciliated cells. Expressed in olfactory and vomeronasal sensory neurons and the respiratory epithelium. Expressed in node cells carrying motile cilia, in upper and lower airways, and in ependymal and choroid plexus cells.

Its subcellular location is the cytoplasm. It is found in the cytoskeleton. The protein localises to the cilium axoneme. Its function is as follows. Required for assembly of dynein regulatory complex (DRC) and inner dynein arm (IDA) complexes, which are responsible for ciliary beat regulation, thereby playing a central role in motility in cilia and flagella. Probably acts together with CCDC40 to form a molecular ruler that determines the 96 nanometer (nm) repeat length and arrangements of components in cilia and flagella. Not required for outer dynein arm complexes assembly. The chain is Coiled-coil domain-containing protein 39 from Mus musculus (Mouse).